Consider the following 351-residue polypeptide: MTDATPLLGRSLPELQDWVVAQGQPSYRAKQLYQWLYERSIHNLAEISVFPKAWRQSLQAVPVGRSQIVDRSVSPSGSIKYLLRLHDGEIIEAVGIPSGDRLTVCVSSQLGCAMACDFCATGKGGFRRHLAPHEIIDQVLTVQEDWQQRVSNIVFMGMGEPLLNLDAVLAAIRCLNQDIGIGQRGITVSTVGIPGHIRRLAETKRVGDRPLQFTLAVSLHAPNQAIRDRLIPSSRHYPITDLLQECRDYVQITGRRVTFEYILLAGLNDQPEQAEQLAQLLRGFQSHVNLIPCNPIDEVEYQRPSKARVDAFADALRQQRVAVTVRWSKGLGADAACGQLRANRSTATLPA.

The active-site Proton acceptor is the glutamate 92. One can recognise a Radical SAM core domain in the interval 98–334; it reads SGDRLTVCVS…VRWSKGLGAD (237 aa). Cysteine 105 and cysteine 337 are joined by a disulfide. Positions 112, 116, and 119 each coordinate [4Fe-4S] cluster. S-adenosyl-L-methionine-binding positions include 159–160, serine 189, 218–220, and asparagine 294; these read GE and SLH. Catalysis depends on cysteine 337, which acts as the S-methylcysteine intermediate.

The protein belongs to the radical SAM superfamily. RlmN family. Requires [4Fe-4S] cluster as cofactor.

It is found in the cytoplasm. The catalysed reaction is adenosine(2503) in 23S rRNA + 2 reduced [2Fe-2S]-[ferredoxin] + 2 S-adenosyl-L-methionine = 2-methyladenosine(2503) in 23S rRNA + 5'-deoxyadenosine + L-methionine + 2 oxidized [2Fe-2S]-[ferredoxin] + S-adenosyl-L-homocysteine. It carries out the reaction adenosine(37) in tRNA + 2 reduced [2Fe-2S]-[ferredoxin] + 2 S-adenosyl-L-methionine = 2-methyladenosine(37) in tRNA + 5'-deoxyadenosine + L-methionine + 2 oxidized [2Fe-2S]-[ferredoxin] + S-adenosyl-L-homocysteine. In terms of biological role, specifically methylates position 2 of adenine 2503 in 23S rRNA and position 2 of adenine 37 in tRNAs. This chain is Probable dual-specificity RNA methyltransferase RlmN, found in Synechococcus sp. (strain ATCC 27144 / PCC 6301 / SAUG 1402/1) (Anacystis nidulans).